We begin with the raw amino-acid sequence, 175 residues long: Crossover junction endodeoxyribonuclease RuvC (175 aa).

Residues Asp-16, Glu-76, and Asp-148 contribute to the active site. The Mg(2+) site is built by Asp-16, Glu-76, and Asp-148.

Belongs to the RuvC family. In terms of assembly, homodimer which binds Holliday junction (HJ) DNA. The HJ becomes 2-fold symmetrical on binding to RuvC with unstacked arms; it has a different conformation from HJ DNA in complex with RuvA. In the full resolvosome a probable DNA-RuvA(4)-RuvB(12)-RuvC(2) complex forms which resolves the HJ. Requires Mg(2+) as cofactor.

The protein resides in the cytoplasm. The catalysed reaction is Endonucleolytic cleavage at a junction such as a reciprocal single-stranded crossover between two homologous DNA duplexes (Holliday junction).. Functionally, the RuvA-RuvB-RuvC complex processes Holliday junction (HJ) DNA during genetic recombination and DNA repair. Endonuclease that resolves HJ intermediates. Cleaves cruciform DNA by making single-stranded nicks across the HJ at symmetrical positions within the homologous arms, yielding a 5'-phosphate and a 3'-hydroxyl group; requires a central core of homology in the junction. The consensus cleavage sequence is 5'-(A/T)TT(C/G)-3'. Cleavage occurs on the 3'-side of the TT dinucleotide at the point of strand exchange. HJ branch migration catalyzed by RuvA-RuvB allows RuvC to scan DNA until it finds its consensus sequence, where it cleaves and resolves the cruciform DNA. The protein is Crossover junction endodeoxyribonuclease RuvC of Bradyrhizobium sp. (strain ORS 278).